A 70-amino-acid polypeptide reads, in one-letter code: Omega-conotoxin-like Bu1 (70 aa).

The signal sequence occupies residues 1–22 (MKLTCVAIVAVLLLTACQLITA). A propeptide spanning residues 23–45 (EDSRGTQLHRALRKTTKLSVSTR) is cleaved from the precursor. Disulfide bonds link Cys46–Cys61, Cys53–Cys65, and Cys60–Cys70.

The protein belongs to the conotoxin O1 superfamily. In terms of tissue distribution, expressed by the venom duct.

Its subcellular location is the secreted. In terms of biological role, omega-conotoxins act at presynaptic membranes, they bind and block voltage-gated calcium channels (Cav). The chain is Omega-conotoxin-like Bu1 from Conus bullatus (Bubble cone).